The following is a 507-amino-acid chain: Lysine--tRNA ligase (507 aa).

The 'HIGH' region signature appears at 26–34 (PSGPIHVGN). Positions 270–274 (AMHSS) match the 'KMSKS' region motif.

The protein belongs to the class-I aminoacyl-tRNA synthetase family.

Its subcellular location is the cytoplasm. It carries out the reaction tRNA(Lys) + L-lysine + ATP = L-lysyl-tRNA(Lys) + AMP + diphosphate. This is Lysine--tRNA ligase (lysS) from Thermoplasma acidophilum (strain ATCC 25905 / DSM 1728 / JCM 9062 / NBRC 15155 / AMRC-C165).